The primary structure comprises 322 residues: Germ cell-specific gene 1-like protein (322 aa).

The Cytoplasmic segment spans residues 1–8 (MKTSRRGR). The helical transmembrane segment at 9–29 (ALLAVALNLLALLFATTAFLT) threads the bilayer. Residues 30–122 (TYWCQGTQRV…FIDLAPASEK (93 aa)) lie on the Extracellular side of the membrane. Residues 123 to 143 (GVLWLSVVSEVLYILLLVVGF) form a helical membrane-spanning segment. Residues 144–163 (SLMCLELLHSSSVIDGLKLN) lie on the Cytoplasmic side of the membrane. A helical transmembrane segment spans residues 164–184 (AFAAVFTVLSGLLGMVAHMMY). The Extracellular segment spans residues 185-207 (TQVFQVTVSLGPEDWRPHSWDYG). Residues 208–228 (WSFCLAWGSFTCCMAASVTTL) traverse the membrane as a helical segment. Residues 229–322 (NSYTKTVIEF…RQCWVLGHWV (94 aa)) are Cytoplasmic-facing. Position 274 is a phosphoserine (serine 274).

This sequence belongs to the GSG1 family. As to quaternary structure, component of the inner core of AMPAR complexes. AMPAR complexes consist of an inner core made of 4 pore-forming GluA/GRIA proteins (GRIA1, GRIA2, GRIA3 and GRIA4) and 4 major auxiliary subunits arranged in a twofold symmetry. One of the two pairs of distinct binding sites is occupied either by CNIH2, CNIH3 or CACNG2, CACNG3. The other harbors CACNG2, CACNG3, CACNG4, CACNG8 or GSG1L. This inner core of AMPAR complexes is complemented by outer core constituents binding directly to the GluA/GRIA proteins at sites distinct from the interaction sites of the inner core constituents. Outer core constituents include at least PRRT1, PRRT2, CKAMP44/SHISA9, FRRS1L and NRN1. The proteins of the inner and outer core serve as a platform for other, more peripherally associated AMPAR constituents. Alone or in combination, these auxiliary subunits control the gating and pharmacology of the AMPAR complexes and profoundly impact their biogenesis and protein processing. As to expression, expressed in the brain (at protein level).

Its subcellular location is the cell membrane. It is found in the synapse. Functionally, as a component of the inner core of AMPAR complexes, modifies AMPA receptor (AMPAR) gating. This is Germ cell-specific gene 1-like protein (Gsg1l) from Rattus norvegicus (Rat).